A 1487-amino-acid chain; its full sequence is Chromosome partition protein MukB (1487 aa).

34–41 (GGNGAGKS) is an ATP binding site. Coiled-coil stretches lie at residues 297-458 (GSRE…TNAL), 506-601 (RESQ…LEAI), 637-666 (LEQE…RLAS), 781-806 (RAAR…AKAA), 836-1109 (EQAL…ELRT), and 1210-1266 (VEAI…LSNI). The segment at 667–784 (PGGSNDPRLK…EIPLFGRAAR (118 aa)) is flexible hinge.

This sequence belongs to the SMC family. MukB subfamily. Homodimerization via its hinge domain. Binds to DNA via its C-terminal region. Interacts, and probably forms a ternary complex, with MukE and MukF via its C-terminal region. The complex formation is stimulated by calcium or magnesium. Interacts with tubulin-related protein FtsZ.

It localises to the cytoplasm. It is found in the nucleoid. In terms of biological role, plays a central role in chromosome condensation, segregation and cell cycle progression. Functions as a homodimer, which is essential for chromosome partition. Involved in negative DNA supercoiling in vivo, and by this means organize and compact chromosomes. May achieve or facilitate chromosome segregation by condensation DNA from both sides of a centrally located replisome during cell division. In Vibrio parahaemolyticus serotype O3:K6 (strain RIMD 2210633), this protein is Chromosome partition protein MukB.